Here is a 742-residue protein sequence, read N- to C-terminus: Protein-associating with the carboxyl-terminal domain of ezrin (742 aa).

A lipid anchor (N-myristoyl glycine) is attached at glycine 2. Residues 2 to 245 (GSENSALKSY…LCTLLSHDFF (244 aa)) form the Protein kinase domain. HEAT repeat units lie at residues 199–238 (ESLL…ALCT), 285–323 (LIAS…HAQG), 333–370 (LFQS…HFTQ), and 372–409 (QLKK…LLGP). Serine 439 bears the Phosphoserine mark. Disordered regions lie at residues 506–544 (LSDV…QTVN), 568–598 (SSWD…TSGE), and 629–652 (GDDA…VPSE). Acidic residues predominate over residues 529-539 (WPDWSEPEEPE). The tract at residues 548–742 (WPREPCDDVK…GELNWEDNNW (195 aa)) is interaction with EZR. Serine 707 is modified (phosphoserine). The tract at residues 723–742 (EGEAEGWEEEGELNWEDNNW) is disordered.

This sequence belongs to the protein kinase superfamily. As to quaternary structure, interacts with EZR/VIL2 C-terminal domain. In terms of processing, may be myristoylated; myristoylation may target it to Golgi compartment. Phosphorylated. Ubiquitously expressed.

The protein localises to the cytoplasm. The protein resides in the golgi apparatus. It is found in the cell projection. It localises to the lamellipodium. Its function is as follows. May play a role in regulating cell adhesion/migration complexes in migrating cells. This Homo sapiens (Human) protein is Protein-associating with the carboxyl-terminal domain of ezrin (SCYL3).